A 103-amino-acid chain; its full sequence is A-type ATP synthase subunit F (103 aa).

It belongs to the V-ATPase F subunit family. As to quaternary structure, has multiple subunits with at least A(3), B(3), C, D, E, F, H, I and proteolipid K(x).

The protein resides in the cell membrane. Its function is as follows. Component of the A-type ATP synthase that produces ATP from ADP in the presence of a proton gradient across the membrane. The sequence is that of A-type ATP synthase subunit F from Pyrococcus abyssi (strain GE5 / Orsay).